Reading from the N-terminus, the 82-residue chain is Putative defensin-like protein 191 (82 aa).

Positions 1–28 (MAKSVNATGFITYMVIFLILTGISRVKA) are cleaved as a signal peptide. 4 disulfide bridges follow: Cys-33–Cys-79, Cys-46–Cys-65, Cys-51–Cys-74, and Cys-55–Cys-76.

This sequence belongs to the DEFL family.

Its subcellular location is the secreted. In Arabidopsis thaliana (Mouse-ear cress), this protein is Putative defensin-like protein 191.